We begin with the raw amino-acid sequence, 95 residues long: UPF0045 protein CPE1503 (95 aa).

Belongs to the UPF0045 family.

The chain is UPF0045 protein CPE1503 from Clostridium perfringens (strain 13 / Type A).